A 1136-amino-acid chain; its full sequence is Tyrosine-protein kinase receptor Tie-1 (1136 aa).

The signal sequence occupies residues 1–23 (MVWLEPPLLLPIFFLASHVGAAV). The Extracellular portion of the chain corresponds to 24–757 (DLTLLADLRL…IHAAEEGLDQ (734 aa)). Residues 43-106 (CVSGEAGAGR…PSDLVGVFSC (64 aa)) form the Ig-like C2-type 1 domain. Asn84 and Asn159 each carry an N-linked (GlcNAc...) asparagine glycan. 3 EGF-like domains span residues 212-254 (GCEA…TRCE), 256-301 (ACRE…SQCQ), and 303-343 (ACAP…MHCE). 3 disulfides stabilise this stretch: Cys226–Cys235, Cys229–Cys242, and Cys244–Cys253. Intrachain disulfides connect Cys317-Cys325, Cys319-Cys331, and Cys333-Cys342. Residues 370–424 (CAAAGNPFPVRGSMELRKPDGTVLLSTKAIVEPDRTTAEFEVPRLALGDSGLWEC) enclose the Ig-like C2-type 2 domain. Fibronectin type-III domains lie at 444–543 (PPVP…CPEP), 546–640 (KPWL…LPPS), and 644–737 (APRH…TLGN). N-linked (GlcNAc...) asparagine glycosylation is found at Asn501, Asn594, and Asn707. A helical transmembrane segment spans residues 758–782 (QLVLAVVGSVSATCLTILAALLTLA). At 783 to 1136 (CIRKSCLHRR…AGIDATAEEA (354 aa)) the chain is on the cytoplasmic side. Residues 837-1116 (ITFEDLIGEG…RMLEARKAYV (280 aa)) form the Protein kinase domain. ATP-binding positions include 843-851 (IGEGNFGQV) and Lys868. Asp977 (proton acceptor) is an active-site residue. Tyr1005 is modified (phosphotyrosine; by autocatalysis).

This sequence belongs to the protein kinase superfamily. Tyr protein kinase family. Tie subfamily. As to quaternary structure, heterodimer with TEK/TIE2. Interacts with SVEP1 (via C-terminus). Phosphorylated on tyrosine residues in response to ANGPT1, most likely by TEK/TIE2. In terms of tissue distribution, specifically expressed in developing vascular endothelial cells.

The protein resides in the cell membrane. The catalysed reaction is L-tyrosyl-[protein] + ATP = O-phospho-L-tyrosyl-[protein] + ADP + H(+). In terms of biological role, transmembrane tyrosine-protein kinase that may modulate TEK/TIE2 activity and contribute to the regulation of angiogenesis. This chain is Tyrosine-protein kinase receptor Tie-1 (TIE1), found in Bos taurus (Bovine).